We begin with the raw amino-acid sequence, 698 residues long: Serine/threonine-protein kinase Nek8 (698 aa).

The Protein kinase domain occupies 4-258 (YERIRVVGRG…LSHIMAQPLC (255 aa)). ATP is bound by residues 10-18 (VGRGAFGIV) and Lys-33. Asp-128 (proton acceptor) is an active-site residue. Thr-162 is modified (phosphothreonine; by autocatalysis). The disordered stretch occupies residues 278–309 (EKSLTPGPPIASGSTGSRATSARCRGVPRGPV). Residues 288-309 (ASGSTGSRATSARCRGVPRGPV) show a composition bias toward low complexity. RCC1 repeat units follow at residues 416 to 467 (GIIM…LSTD), 468 to 519 (GELF…LTSP), 520 to 585 (GRVL…ITAS), 586 to 637 (GDCY…VGAE), and 638 to 690 (GEVY…AVRS).

This sequence belongs to the protein kinase superfamily. NEK Ser/Thr protein kinase family. NIMA subfamily. In terms of assembly, interacts with PKD2; may regulate PKD2 targeting to the cilium. Interacts with ANKS6. Component of a complex containing at least ANKS6, INVS, NEK8 and NPHP3. ANKS6 may organize complex assembly by linking INVS and NPHP3 to NEK8 and INVS may target the complex to the proximal ciliary axoneme. Interacts with ANKS3. Mg(2+) serves as cofactor. Kidney, liver, and testis.

The protein localises to the cytoplasm. The protein resides in the cytoskeleton. Its subcellular location is the cell projection. It localises to the cilium. It is found in the microtubule organizing center. The protein localises to the centrosome. The protein resides in the cilium axoneme. It catalyses the reaction L-seryl-[protein] + ATP = O-phospho-L-seryl-[protein] + ADP + H(+). It carries out the reaction L-threonyl-[protein] + ATP = O-phospho-L-threonyl-[protein] + ADP + H(+). Functionally, required for renal tubular integrity. May regulate local cytoskeletal structure in kidney tubule epithelial cells. May regulate ciliary biogenesis through targeting of proteins to the cilia. Plays a role in organogenesis and is involved in the regulation of the Hippo signaling pathway. The sequence is that of Serine/threonine-protein kinase Nek8 (Nek8) from Mus musculus (Mouse).